Consider the following 134-residue polypeptide: MADTFLLKIVTPDKDIFNGNIKRIFLKNSVGRLEILANHANMVTSTISSIVEFTDADGKDRKLFISKGIASIFNNEMTIFSESAEFSDNIDLNRAEKAKERAEKRLLEGNKYDKERAELALLRSIERINLKKMN.

This sequence belongs to the ATPase epsilon chain family. F-type ATPases have 2 components, CF(1) - the catalytic core - and CF(0) - the membrane proton channel. CF(1) has five subunits: alpha(3), beta(3), gamma(1), delta(1), epsilon(1). CF(0) has three main subunits: a, b and c.

It is found in the cell membrane. Functionally, produces ATP from ADP in the presence of a proton gradient across the membrane. The protein is ATP synthase epsilon chain of Clostridium botulinum (strain Eklund 17B / Type B).